Reading from the N-terminus, the 2211-residue chain is Orsellinic acid synthase (2211 aa).

The tract at residues 44–246 (TFREQVSDAI…TVAVVHSLYH (203 aa)) is N-terminal acylcarrier protein transacylase domain (SAT). In terms of domain architecture, Ketosynthase family 3 (KS3) spans 380–805 (WDDIAIVGMA…GSNAAVIIGE (426 aa)). Residues Cys549, His684, and His724 each act as for beta-ketoacyl synthase activity in the active site. Residues 910–1228 (VFIFSGQGSQ…QLTTLKKNVP (319 aa)) are malonyl-CoA:ACP transacylase (MAT) domain. Catalysis depends on Ser1006, which acts as the For acyl/malonyl transferase activity. Residues 1309-1440 (HAIQKLSHGA…GVVKQSNMAS (132 aa)) form an N-terminal hotdog fold region. The 321-residue stretch at 1309–1629 (HAIQKLSHGA…FQHVKIPLIE (321 aa)) folds into the PKS/mFAS DH domain. The tract at residues 1334 to 1573 (EFIEGHLVCG…GATTLRAPVV (240 aa)) is product template (PT) domain. His1339 functions as the Proton acceptor; for dehydratase activity in the catalytic mechanism. The segment at 1473-1629 (VQVFSKRAMY…FQHVKIPLIE (157 aa)) is C-terminal hotdog fold. Asp1537 serves as the catalytic Proton donor; for dehydratase activity. 2 consecutive Carrier domains span residues 1681-1755 (AAPE…EALS) and 1787-1865 (STVD…VKRP). Ser1715 carries the O-(pantetheine 4'-phosphoryl)serine modification. The tract at residues 1755–1786 (SPTPVGNDVDNDSPTPGSERGSDSAISTPASV) is disordered. Ser1824 carries the post-translational modification O-(pantetheine 4'-phosphoryl)serine. Residues 1937–2204 (SGKSPLFLIH…AAVSAALVDA (268 aa)) form a thioesterase (TE) domain region.

It carries out the reaction 3 malonyl-CoA + acetyl-CoA + 2 H(+) = orsellinate + 3 CO2 + 4 CoA. It functions in the pathway secondary metabolite biosynthesis. In terms of biological role, non-reducing polyketide synthase; part of the gene cluster that mediates the biosynthesis of the bibenzoquinone oosporein, a metabolite required for fungal virulence that acts by evading host immunity to facilitate fungal multiplication in insects. The non-reducing polyketide synthase OpS1 produces orsellinic acid by condensing acetyl-CoA with 3 malonyl-CoA units. Orsellinic acid is then hydroxylated to benzenetriol by the hydroxylase OpS4. The intermediate is oxidized either nonenzymatically to 5,5'-dideoxy-oosporein or enzymatically to benzenetetrol by the oxidoreductase OpS7. The latter is further dimerized to oosporein by the catalase OpS5. OpS6 probably functions en route for protecting cells against oxidative stress by scavenging any leaked free radical form of benzenetetrol by activating the thiol group of glutathione. In Beauveria bassiana (strain ARSEF 2860) (White muscardine disease fungus), this protein is Orsellinic acid synthase.